The sequence spans 927 residues: Lysine-specific demethylase JMJ28 (927 aa).

The 46-residue stretch at 7–52 (VPDEFRCNRSDGKQWRCKRRALEGKKMCESHHSQQSLKRSKQKVAE) folds into the WRC domain. Positions 30 to 37 (GKKMCESH) match the Nuclear localization signal 1 motif. The tract at residues 30–92 (GKKMCESHHS…RLGKSKRKRV (63 aa)) is disordered. The segment covering 80–91 (RSKRLGKSKRKR) has biased composition (basic residues). Residues 127–134 (EKRKRLPN) carry the Nuclear localization signal 2 motif. Zn(2+)-binding residues include Cys-227, Cys-230, Cys-241, Cys-244, Cys-250, Cys-253, Cys-269, and Cys-272. The RING-type; degenerate zinc-finger motif lies at 227–273 (CHWCGTRGFGDLISCLSCEREFFCIDCIEKRNKGSKEEVEKKCPVCR). The segment covering 330–339 (ENDAEKKEGN) has biased composition (basic and acidic residues). Disordered stretches follow at residues 330-359 (ENDAEKKEGNPAEPQIHSSELTSDDRQPCS) and 701-736 (RSKNPAKGRESRFDKGKKRDRLDDYSSSDSESSQHC). The region spanning 601-881 (FPNHYAEILN…ESIKRVKELN (281 aa)) is the JmjC domain.

The protein belongs to the JARID1 histone demethylase family. Interacts with the FBH transcription factors FBH1, FBH2, FBH3 and FBH4. Fe(2+) serves as cofactor. Expressed in inflorescences, flowers, roots, siliques, leaves and stems, especially in the vasculature (mainly phloem), with highest levels in floral organs. Present at high levels in flowers, shoot apex and young seeds, but observed at low levels in dry seeds, root apex and anthers.

It is found in the nucleus. Its function is as follows. May function as histone H3 lysine demethylase and be involved in regulation of gene expression. Regulates flowering time by promoting CONSTANS (CO) and CONSTANS-LIKE genes (e.g. COL2 and COL5) expression via interaction with FBH transcription factors (FBH1, FBH2, FBH3 and FBH4) at their loci to remove H3K9me2 repressive histone marks. Also modulates the expression of several developmental genes such as MYB30, TFS1, AGL6 and RVE2. This chain is Lysine-specific demethylase JMJ28, found in Arabidopsis thaliana (Mouse-ear cress).